The following is a 257-amino-acid chain: Triosephosphate isomerase (257 aa).

9 to 11 (NWK) provides a ligand contact to substrate. Histidine 95 acts as the Electrophile in catalysis. The active-site Proton acceptor is glutamate 168. Residues glycine 174, serine 213, and 234 to 235 (GG) each bind substrate.

It belongs to the triosephosphate isomerase family. As to quaternary structure, homodimer.

The protein resides in the cytoplasm. The enzyme catalyses D-glyceraldehyde 3-phosphate = dihydroxyacetone phosphate. The protein operates within carbohydrate biosynthesis; gluconeogenesis. Its pathway is carbohydrate degradation; glycolysis; D-glyceraldehyde 3-phosphate from glycerone phosphate: step 1/1. Its function is as follows. Involved in the gluconeogenesis. Catalyzes stereospecifically the conversion of dihydroxyacetone phosphate (DHAP) to D-glyceraldehyde-3-phosphate (G3P). This Acidithiobacillus ferrooxidans (strain ATCC 23270 / DSM 14882 / CIP 104768 / NCIMB 8455) (Ferrobacillus ferrooxidans (strain ATCC 23270)) protein is Triosephosphate isomerase.